The primary structure comprises 105 residues: Protein RALF-like 21 (105 aa).

A signal peptide spans 1–30; that stretch reads MSNMKITNRFMLVATFIACVFISSMNMTVG. Intrachain disulfides connect cysteine 44-cysteine 53 and cysteine 67-cysteine 73.

It belongs to the plant rapid alkalinization factor (RALF) family. In terms of tissue distribution, expressed in seeds and rosettes.

The protein localises to the secreted. Cell signaling peptide that may regulate plant stress, growth, and development. Mediates a rapid alkalinization of extracellular space by mediating a transient increase in the cytoplasmic Ca(2+) concentration leading to a calcium-dependent signaling events through a cell surface receptor and a concomitant activation of some intracellular mitogen-activated protein kinases. The sequence is that of Protein RALF-like 21 (RALFL21) from Arabidopsis thaliana (Mouse-ear cress).